The following is a 309-amino-acid chain: NAD kinase (309 aa).

Catalysis depends on Asp-89, which acts as the Proton acceptor. Residues 89–90, 163–164, His-174, Arg-191, Asp-193, and 204–209 each bind NAD(+); these read DG, NE, and TAYALS.

The protein belongs to the NAD kinase family. A divalent metal cation serves as cofactor.

The protein resides in the cytoplasm. The enzyme catalyses NAD(+) + ATP = ADP + NADP(+) + H(+). In terms of biological role, involved in the regulation of the intracellular balance of NAD and NADP, and is a key enzyme in the biosynthesis of NADP. Catalyzes specifically the phosphorylation on 2'-hydroxyl of the adenosine moiety of NAD to yield NADP. The polypeptide is NAD kinase (Shewanella sp. (strain ANA-3)).